A 134-amino-acid chain; its full sequence is NADH-quinone oxidoreductase subunit A (134 aa).

Helical transmembrane passes span 12–32 (FAIYVIAAICLCLVMIGLAAL), 64–84 (FYLVAMFFVIFDVEALYLFAW), and 93–113 (WVGFIEAAIFIGLLLVGLLYL).

The protein belongs to the complex I subunit 3 family. NDH-1 is composed of 14 different subunits. Subunits NuoA, H, J, K, L, M, N constitute the membrane sector of the complex.

Its subcellular location is the cell inner membrane. It carries out the reaction a quinone + NADH + 5 H(+)(in) = a quinol + NAD(+) + 4 H(+)(out). Functionally, NDH-1 shuttles electrons from NADH, via FMN and iron-sulfur (Fe-S) centers, to quinones in the respiratory chain. The immediate electron acceptor for the enzyme in this species is believed to be ubiquinone. Couples the redox reaction to proton translocation (for every two electrons transferred, four hydrogen ions are translocated across the cytoplasmic membrane), and thus conserves the redox energy in a proton gradient. This is NADH-quinone oxidoreductase subunit A from Aeromonas salmonicida (strain A449).